Reading from the N-terminus, the 305-residue chain is Protoheme IX farnesyltransferase 2 (305 aa).

8 consecutive transmembrane segments (helical) span residues 38-58 (LITTFTGMWLALHISGLSFLG), 60-80 (INTVLLTLIGSSLIIAGSCAI), 115-135 (ILLVALGLIMLLMTTVMAAVI), 157-177 (INTVVGSVSGAVPPLIGWTAV), 181-201 (IGVVAWVLFMILFIWQIPHFL), 227-247 (VTKRQIIVWVACLMPLPFFLG), 249-269 (LGLPIVILGLLLNIGWLILGL), and 285-305 (FVYSLNYMTIYFVAMVVLTLF).

It belongs to the UbiA prenyltransferase family. Protoheme IX farnesyltransferase subfamily. In terms of assembly, interacts with CtaA.

It localises to the cell membrane. The catalysed reaction is heme b + (2E,6E)-farnesyl diphosphate + H2O = Fe(II)-heme o + diphosphate. The protein operates within porphyrin-containing compound metabolism; heme O biosynthesis; heme O from protoheme: step 1/1. Functionally, converts heme B (protoheme IX) to heme O by substitution of the vinyl group on carbon 2 of heme B porphyrin ring with a hydroxyethyl farnesyl side group. The sequence is that of Protoheme IX farnesyltransferase 2 (ctaB2) from Bacillus subtilis (strain 168).